The following is a 334-amino-acid chain: Aspartate carbamoyltransferase catalytic subunit (334 aa).

Carbamoyl phosphate-binding residues include arginine 71 and threonine 72. Lysine 99 lines the L-aspartate pocket. Carbamoyl phosphate contacts are provided by arginine 121, histidine 151, and glutamine 154. Arginine 184 and arginine 239 together coordinate L-aspartate. Positions 280 and 281 each coordinate carbamoyl phosphate.

This sequence belongs to the aspartate/ornithine carbamoyltransferase superfamily. ATCase family. In terms of assembly, heterododecamer (2C3:3R2) of six catalytic PyrB chains organized as two trimers (C3), and six regulatory PyrI chains organized as three dimers (R2).

It catalyses the reaction carbamoyl phosphate + L-aspartate = N-carbamoyl-L-aspartate + phosphate + H(+). It functions in the pathway pyrimidine metabolism; UMP biosynthesis via de novo pathway; (S)-dihydroorotate from bicarbonate: step 2/3. Its function is as follows. Catalyzes the condensation of carbamoyl phosphate and aspartate to form carbamoyl aspartate and inorganic phosphate, the committed step in the de novo pyrimidine nucleotide biosynthesis pathway. This chain is Aspartate carbamoyltransferase catalytic subunit, found in Pseudomonas savastanoi pv. phaseolicola (strain 1448A / Race 6) (Pseudomonas syringae pv. phaseolicola (strain 1448A / Race 6)).